Reading from the N-terminus, the 403-residue chain is Probable tRNA sulfurtransferase (403 aa).

In terms of domain architecture, THUMP spans glutamine 60 to threonine 165. ATP contacts are provided by residues methionine 183–leucine 184, histidine 208–phenylalanine 209, arginine 265, glycine 287, and glutamine 296.

Belongs to the ThiI family.

The protein resides in the cytoplasm. It carries out the reaction [ThiI sulfur-carrier protein]-S-sulfanyl-L-cysteine + a uridine in tRNA + 2 reduced [2Fe-2S]-[ferredoxin] + ATP + H(+) = [ThiI sulfur-carrier protein]-L-cysteine + a 4-thiouridine in tRNA + 2 oxidized [2Fe-2S]-[ferredoxin] + AMP + diphosphate. The enzyme catalyses [ThiS sulfur-carrier protein]-C-terminal Gly-Gly-AMP + S-sulfanyl-L-cysteinyl-[cysteine desulfurase] + AH2 = [ThiS sulfur-carrier protein]-C-terminal-Gly-aminoethanethioate + L-cysteinyl-[cysteine desulfurase] + A + AMP + 2 H(+). The protein operates within cofactor biosynthesis; thiamine diphosphate biosynthesis. In terms of biological role, catalyzes the ATP-dependent transfer of a sulfur to tRNA to produce 4-thiouridine in position 8 of tRNAs, which functions as a near-UV photosensor. Also catalyzes the transfer of sulfur to the sulfur carrier protein ThiS, forming ThiS-thiocarboxylate. This is a step in the synthesis of thiazole, in the thiamine biosynthesis pathway. The sulfur is donated as persulfide by IscS. The chain is Probable tRNA sulfurtransferase from Listeria monocytogenes serotype 4b (strain CLIP80459).